The primary structure comprises 134 residues: Large ribosomal subunit protein uL22 (134 aa).

The protein belongs to the universal ribosomal protein uL22 family. In terms of assembly, part of the 50S ribosomal subunit.

In terms of biological role, this protein binds specifically to 23S rRNA; its binding is stimulated by other ribosomal proteins, e.g. L4, L17, and L20. It is important during the early stages of 50S assembly. It makes multiple contacts with different domains of the 23S rRNA in the assembled 50S subunit and ribosome. Its function is as follows. The globular domain of the protein is located near the polypeptide exit tunnel on the outside of the subunit, while an extended beta-hairpin is found that lines the wall of the exit tunnel in the center of the 70S ribosome. The protein is Large ribosomal subunit protein uL22 of Karelsulcia muelleri (strain GWSS) (Sulcia muelleri).